The chain runs to 151 residues: Probable cGMP 3',5'-cyclic phosphodiesterase subunit delta (151 aa).

This sequence belongs to the PDE6D/unc-119 family. In terms of assembly, interacts with Pde6.

The protein localises to the nucleus. It localises to the cytoplasm. In Drosophila grimshawi (Hawaiian fruit fly), this protein is Probable cGMP 3',5'-cyclic phosphodiesterase subunit delta.